The chain runs to 214 residues: Probable nicotinate-nucleotide adenylyltransferase (214 aa).

It belongs to the NadD family.

The catalysed reaction is nicotinate beta-D-ribonucleotide + ATP + H(+) = deamido-NAD(+) + diphosphate. Its pathway is cofactor biosynthesis; NAD(+) biosynthesis; deamido-NAD(+) from nicotinate D-ribonucleotide: step 1/1. In terms of biological role, catalyzes the reversible adenylation of nicotinate mononucleotide (NaMN) to nicotinic acid adenine dinucleotide (NaAD). This chain is Probable nicotinate-nucleotide adenylyltransferase, found in Pseudomonas fluorescens (strain ATCC BAA-477 / NRRL B-23932 / Pf-5).